The following is a 369-amino-acid chain: Glutamate 5-kinase (369 aa).

Residue Lys-9 coordinates ATP. Ser-49, Asp-136, and Asn-148 together coordinate substrate. ATP-binding positions include 168–169 (TD) and 210–216 (TGGMLTK). In terms of domain architecture, PUA spans 275-355 (QGSIWVDKGA…KGVLIYRDDW (81 aa)).

This sequence belongs to the glutamate 5-kinase family.

It is found in the cytoplasm. The enzyme catalyses L-glutamate + ATP = L-glutamyl 5-phosphate + ADP. It participates in amino-acid biosynthesis; L-proline biosynthesis; L-glutamate 5-semialdehyde from L-glutamate: step 1/2. Its function is as follows. Catalyzes the transfer of a phosphate group to glutamate to form L-glutamate 5-phosphate. The polypeptide is Glutamate 5-kinase (Streptococcus pneumoniae (strain ATCC 700669 / Spain 23F-1)).